The primary structure comprises 51 residues: Sperm protamine P1 (51 aa).

It belongs to the protamine P1 family. As to expression, testis.

It is found in the nucleus. The protein localises to the chromosome. Its function is as follows. Protamines substitute for histones in the chromatin of sperm during the haploid phase of spermatogenesis. They compact sperm DNA into a highly condensed, stable and inactive complex. The protein is Sperm protamine P1 (PRM1) of Macaca mulatta (Rhesus macaque).